A 399-amino-acid polypeptide reads, in one-letter code: Nicotinate phosphoribosyltransferase (399 aa).

A Phosphohistidine; by autocatalysis modification is found at His221.

This sequence belongs to the NAPRTase family. Transiently phosphorylated on a His residue during the reaction cycle. Phosphorylation strongly increases the affinity for substrates and increases the rate of nicotinate D-ribonucleotide production. Dephosphorylation regenerates the low-affinity form of the enzyme, leading to product release.

It catalyses the reaction nicotinate + 5-phospho-alpha-D-ribose 1-diphosphate + ATP + H2O = nicotinate beta-D-ribonucleotide + ADP + phosphate + diphosphate. Its pathway is cofactor biosynthesis; NAD(+) biosynthesis; nicotinate D-ribonucleotide from nicotinate: step 1/1. Functionally, catalyzes the synthesis of beta-nicotinate D-ribonucleotide from nicotinate and 5-phospho-D-ribose 1-phosphate at the expense of ATP. This is Nicotinate phosphoribosyltransferase from Buchnera aphidicola subsp. Acyrthosiphon pisum (strain 5A).